Here is a 275-residue protein sequence, read N- to C-terminus: Formamidopyrimidine-DNA glycosylase (275 aa).

P2 functions as the Schiff-base intermediate with DNA in the catalytic mechanism. Catalysis depends on E3, which acts as the Proton donor. Residue K58 is the Proton donor; for beta-elimination activity of the active site. Residues H91 and R110 each coordinate DNA. The segment at 238 to 272 (QVYGQTGKPCPRCGQAIVKLKVGGRGTHICPKCQK) adopts an FPG-type zinc-finger fold. R262 acts as the Proton donor; for delta-elimination activity in catalysis.

Belongs to the FPG family. As to quaternary structure, monomer. It depends on Zn(2+) as a cofactor.

The enzyme catalyses Hydrolysis of DNA containing ring-opened 7-methylguanine residues, releasing 2,6-diamino-4-hydroxy-5-(N-methyl)formamidopyrimidine.. It catalyses the reaction 2'-deoxyribonucleotide-(2'-deoxyribose 5'-phosphate)-2'-deoxyribonucleotide-DNA = a 3'-end 2'-deoxyribonucleotide-(2,3-dehydro-2,3-deoxyribose 5'-phosphate)-DNA + a 5'-end 5'-phospho-2'-deoxyribonucleoside-DNA + H(+). Involved in base excision repair of DNA damaged by oxidation or by mutagenic agents. Acts as a DNA glycosylase that recognizes and removes damaged bases. Has a preference for oxidized purines, such as 7,8-dihydro-8-oxoguanine (8-oxoG). Has AP (apurinic/apyrimidinic) lyase activity and introduces nicks in the DNA strand. Cleaves the DNA backbone by beta-delta elimination to generate a single-strand break at the site of the removed base with both 3'- and 5'-phosphates. The sequence is that of Formamidopyrimidine-DNA glycosylase from Streptococcus pyogenes serotype M18 (strain MGAS8232).